The primary structure comprises 268 residues: MSDSILFAFSLTLLAGLATGIGSIIGFLSKDVNPKMLTVSLGFSAGVMLYVSMIEIFVKAKDALSVELGDKAGYIWTVIAFFVGIFVIALIDKLVPAYENPHEMNTEKIIEESSAKDKAKLLRMGLFSALAIGIHNFPEGLATFMSGLSNPTLGISIAVAIAIHNIPEGLAVSAPIYFATKSRKKAFVLSFLSGLAEPIGAIAGFFLLRTLFTELTFGLVFASVAGIMVYISLDELLPTAEEYGEHHLAIGGLVGGMLVMAVSLLLFL.

8 helical membrane-spanning segments follow: residues 5 to 25, 38 to 58, 72 to 92, 124 to 144, 152 to 172, 187 to 207, 211 to 231, and 248 to 268; these read ILFA…GSII, TVSL…EIFV, AGYI…ALID, MGLF…LATF, TLGI…GLAV, FVLS…GFFL, LFTE…MVYI, and LAIG…LLFL. Fe(2+) contacts are provided by Asn136 and Glu139. Zn(2+) is bound by residues Glu139 and His164. Residues Asn165, Glu168, and Glu197 each contribute to the Fe(2+) site. Glu168 is a binding site for Zn(2+).

This sequence belongs to the ZIP transporter (TC 2.A.5) family. ZupT subfamily.

It is found in the cell inner membrane. It catalyses the reaction Zn(2+)(in) = Zn(2+)(out). In terms of biological role, mediates zinc uptake. May also transport other divalent cations. In Chlorobaculum parvum (strain DSM 263 / NCIMB 8327) (Chlorobium vibrioforme subsp. thiosulfatophilum), this protein is Zinc transporter ZupT.